The sequence spans 273 residues: Putative tyrosine-protein phosphatase H16_A0669 (273 aa).

Residues 1-15 (MIKWLQRAGCLSAHA) form the signal peptide. Cys-169 acts as the Phosphocysteine intermediate in catalysis.

This sequence belongs to the protein-tyrosine phosphatase family.

The catalysed reaction is O-phospho-L-tyrosyl-[protein] + H2O = L-tyrosyl-[protein] + phosphate. This Cupriavidus necator (strain ATCC 17699 / DSM 428 / KCTC 22496 / NCIMB 10442 / H16 / Stanier 337) (Ralstonia eutropha) protein is Putative tyrosine-protein phosphatase H16_A0669.